The chain runs to 525 residues: Anti-silencing protein 2 (525 aa).

A disordered region spans residues 467–525 (LPRVPTDSPQLPSKDKSQETAKKDDRPKLVANEPVTLDTSTPPVAQSLADSKHCSGLHK). Residues 479 to 494 (SKDKSQETAKKDDRPK) show a composition bias toward basic and acidic residues.

In terms of biological role, derepression of silent mating type loci when overexpressed. The protein is Anti-silencing protein 2 (ASF2) of Saccharomyces cerevisiae (strain ATCC 204508 / S288c) (Baker's yeast).